A 198-amino-acid polypeptide reads, in one-letter code: Armadillo repeat-containing protein 7 (198 aa).

ARM repeat units lie at residues 57-99 and 100-140; these read QVLD…HAGG and VPLI…TATP. Ser169 carries the phosphoserine modification.

As to quaternary structure, component of the minor spliceosome. Within this complex, interacts with RBM48.

Its function is as follows. As a component of the minor spliceosome, involved in the splicing of U12-type introns in pre-mRNAs. The polypeptide is Armadillo repeat-containing protein 7 (ARMC7) (Homo sapiens (Human)).